Here is a 580-residue protein sequence, read N- to C-terminus: Sensor histidine kinase YvrG (580 aa).

Residues 1-6 (MRLRWK) are Cytoplasmic-facing. A helical membrane pass occupies residues 7–27 (FLFHFFGQMLIVILLLTVMLV). At 28–261 (ASFFYLDARF…KSFLKVVLKA (234 aa)) the chain is on the extracellular side. Residues 262–282 (MFLVMAVLFMYIIWMTVWYMF) form a helical membrane-spanning segment. Residues 283 to 580 (RFGLPIFHTI…TVITILFKKQ (298 aa)) lie on the Cytoplasmic side of the membrane. Residues 363-580 (GLSHDLKTPL…TVITILFKKQ (218 aa)) enclose the Histidine kinase domain. Position 366 is a phosphohistidine; by autocatalysis (His366).

The protein localises to the cell membrane. The catalysed reaction is ATP + protein L-histidine = ADP + protein N-phospho-L-histidine.. Member of the two-component regulatory system YvrG/YvrH that positively regulates 7 transcriptional units (wprA, wapA-yxxG, dltABCDE, sunA, sunT-bdbA-yolJ-bdbB, sigO-rsoA, and sigX-rsiX), and negatively regulates the lytABC operon. Probably activates YvrH by phosphorylation. The chain is Sensor histidine kinase YvrG (yvrG) from Bacillus subtilis (strain 168).